An 88-amino-acid chain; its full sequence is Apolipoprotein C-I (88 aa).

Positions 1-26 (MRLILSLPVLVVVLSMVLEGPAPAQA) are cleaved as a signal peptide.

Belongs to the apolipoprotein C1 family.

It localises to the secreted. Inhibitor of lipoprotein binding to the low density lipoprotein (LDL) receptor, LDL receptor-related protein, and very low density lipoprotein (VLDL) receptor. Associates with high density lipoproteins (HDL) and the triacylglycerol-rich lipoproteins in the plasma and makes up about 10% of the protein of the VLDL and 2% of that of HDL. Appears to interfere directly with fatty acid uptake and is also the major plasma inhibitor of cholesteryl ester transfer protein (CETP). Binds free fatty acids and reduces their intracellular esterification. Modulates the interaction of APOE with beta-migrating VLDL and inhibits binding of beta-VLDL to the LDL receptor-related protein. The protein is Apolipoprotein C-I (APOC1) of Lycaon pictus (African wild dog).